Consider the following 74-residue polypeptide: ATP synthase subunit c (74 aa).

The next 2 helical transmembrane spans lie at 8–28 and 52–72; these read FIGI…VSNI and IGAG…MLLI.

The protein belongs to the ATPase C chain family. As to quaternary structure, F-type ATPases have 2 components, F(1) - the catalytic core - and F(0) - the membrane proton channel. F(1) has five subunits: alpha(3), beta(3), gamma(1), delta(1), epsilon(1). F(0) has three main subunits: a(1), b(2) and c(10-14). The alpha and beta chains form an alternating ring which encloses part of the gamma chain. F(1) is attached to F(0) by a central stalk formed by the gamma and epsilon chains, while a peripheral stalk is formed by the delta and b chains.

The protein resides in the cell inner membrane. Its function is as follows. F(1)F(0) ATP synthase produces ATP from ADP in the presence of a proton or sodium gradient. F-type ATPases consist of two structural domains, F(1) containing the extramembraneous catalytic core and F(0) containing the membrane proton channel, linked together by a central stalk and a peripheral stalk. During catalysis, ATP synthesis in the catalytic domain of F(1) is coupled via a rotary mechanism of the central stalk subunits to proton translocation. Key component of the F(0) channel; it plays a direct role in translocation across the membrane. A homomeric c-ring of between 10-14 subunits forms the central stalk rotor element with the F(1) delta and epsilon subunits. The chain is ATP synthase subunit c from Rickettsia akari (strain Hartford).